A 108-amino-acid chain; its full sequence is Phosphoribosyl-AMP cyclohydrolase (108 aa).

Aspartate 78 contacts Mg(2+). Residue cysteine 79 coordinates Zn(2+). Residues aspartate 80 and aspartate 82 each coordinate Mg(2+). Residues cysteine 95 and cysteine 102 each contribute to the Zn(2+) site.

It belongs to the PRA-CH family. As to quaternary structure, homodimer. Mg(2+) serves as cofactor. Requires Zn(2+) as cofactor.

Its subcellular location is the cytoplasm. The enzyme catalyses 1-(5-phospho-beta-D-ribosyl)-5'-AMP + H2O = 1-(5-phospho-beta-D-ribosyl)-5-[(5-phospho-beta-D-ribosylamino)methylideneamino]imidazole-4-carboxamide. It participates in amino-acid biosynthesis; L-histidine biosynthesis; L-histidine from 5-phospho-alpha-D-ribose 1-diphosphate: step 3/9. Functionally, catalyzes the hydrolysis of the adenine ring of phosphoribosyl-AMP. The polypeptide is Phosphoribosyl-AMP cyclohydrolase (Cenarchaeum symbiosum (strain A)).